The chain runs to 124 residues: uncharacterized protein (124 aa).

The segment at methionine 1–leucine 28 is disordered. The segment covering serine 9–leucine 28 has biased composition (basic and acidic residues).

This is an uncharacterized protein from Mus musculus (Mouse).